We begin with the raw amino-acid sequence, 214 residues long: Phosphopantothenoylcysteine decarboxylase HAL3 (214 aa).

Residues 30-32 (GSV) and 55-57 (TRA) each bind FMN. H92 acts as the Proton donor in catalysis. FMN-binding positions include 108–111 (SANT) and A142. The N-[(R)-4-phosphopantothenoyl]-L-cysteine site is built by N144, R174, and A176. Catalysis depends on C177, which acts as the Proton donor. M185 is a binding site for N-[(R)-4-phosphopantothenoyl]-L-cysteine.

It belongs to the HFCD (homooligomeric flavin containing Cys decarboxylase) superfamily. As to quaternary structure, homotrimer. FMN serves as cofactor. As to expression, mainly expressed in stems, to a lower extent in flowers, leaves and fruits, and at basal levels in roots.

It localises to the cell membrane. The protein localises to the cytoplasm. The enzyme catalyses N-[(R)-4-phosphopantothenoyl]-L-cysteine + H(+) = (R)-4'-phosphopantetheine + CO2. Its pathway is cofactor biosynthesis; coenzyme A biosynthesis; CoA from (R)-pantothenate: step 3/5. In terms of biological role, involved in plant growth, and promotes salt and osmotic tolerance, probably via coenzyme A (CoA) accumulation and endogenous proline accumulation. Catalyzes the decarboxylation of 4'-phosphopantothenoylcysteine to 4'-phosphopantetheine, a key step in coenzyme A biosynthesis. Required for roots development. The chain is Phosphopantothenoylcysteine decarboxylase HAL3 from Malus domestica (Apple).